The chain runs to 433 residues: Keratin, type I cytoskeletal 17 (433 aa).

Residues 1–24 (MTTTIRQFTSSSSIKGSSGLGGGS) form a disordered region. The head stretch occupies residues 1–83 (MTTTIRQFTS…GGVDGLLAGG (83 aa)). Ser-12 and Ser-13 each carry phosphoserine. A Glycyl lysine isopeptide (Lys-Gly) (interchain with G-Cter in SUMO1); alternate cross-link involves residue Lys-15. Residue Lys-15 forms a Glycyl lysine isopeptide (Lys-Gly) (interchain with G-Cter in SUMO2); alternate linkage. A phosphoserine mark is found at Ser-25, Ser-32, Ser-34, and Ser-39. The residue at position 44 (Ser-44) is a Phosphoserine; by RPS6KA1. Residues 84–120 (EKATMQNLNDRLASYLDKVRALEEANTELEVKIRDWY) form a coil 1A region. In terms of domain architecture, IF rod spans 84–395 (EKATMQNLND…RLLEGEDAHL (312 aa)). Thr-110 carries the phosphothreonine modification. Residues 121-138 (QKQAPGPARDYSAYYQTI) are linker 1. Residues 139 to 230 (EDLKNKILVA…NHEEEMNALR (92 aa)) are coil 1B. The linker 12 stretch occupies residues 231–250 (GQVGGEINVEMDAAPGVDLS). The tract at residues 251–392 (RILSEMRDQY…TYRRLLEGED (142 aa)) is coil 2. Residue Lys-278 forms a Glycyl lysine isopeptide (Lys-Gly) (interchain with G-Cter in SUMO2) linkage. Thr-279 carries the phosphothreonine modification. Ser-323 is modified (phosphoserine). Positions 393 to 433 (AHLTQYKPKEPVTTRQVRTIVEEVQDGKVISSREQVHQTTR) are tail. Residues Lys-399, Lys-401, and Lys-420 each participate in a glycyl lysine isopeptide (Lys-Gly) (interchain with G-Cter in SUMO1); alternate cross-link. Glycyl lysine isopeptide (Lys-Gly) (interchain with G-Cter in SUMO2); alternate cross-links involve residues Lys-399, Lys-401, and Lys-420.

Belongs to the intermediate filament family. Heterodimer of a type I and a type II keratin. KRT17 associates with KRT6 isomers (KRT6A or KRT6B). Interacts with TRADD and SFN. Phosphorylation at Ser-44 occurs in a growth- and stress-dependent fashion in skin keratinocytes, it has no effect on filament organization.

The protein resides in the cytoplasm. Type I keratin involved in the formation and maintenance of various skin appendages, specifically in determining shape and orientation of hair. Required for the correct growth of hair follicles, in particular for the persistence of the anagen (growth) state. Modulates the function of TNF-alpha in the specific context of hair cycling. Regulates protein synthesis and epithelial cell growth through binding to the adapter protein SFN and by stimulating Akt/mTOR pathway. Involved in tissue repair. May be a marker of basal cell differentiation in complex epithelia and therefore indicative of a certain type of epithelial 'stem cells'. Acts as a promoter of epithelial proliferation by acting a regulator of immune response in skin: promotes Th1/Th17-dominated immune environment contributing to the development of basaloid skin tumors. May act as an autoantigen in the immunopathogenesis of psoriasis, with certain peptide regions being a major target for autoreactive T-cells and hence causing their proliferation. In Rattus norvegicus (Rat), this protein is Keratin, type I cytoskeletal 17.